The primary structure comprises 76 residues: Putative membrane protein insertion efficiency factor (76 aa).

Belongs to the UPF0161 family.

The protein localises to the cell inner membrane. Its function is as follows. Could be involved in insertion of integral membrane proteins into the membrane. This is Putative membrane protein insertion efficiency factor from Paraburkholderia phytofirmans (strain DSM 17436 / LMG 22146 / PsJN) (Burkholderia phytofirmans).